The sequence spans 515 residues: MSILKCLGVRGNQLCAARNYLKVLGFSSFHTAPNSSIEIQTQDEEVVIALGSNVGDRLHNFKEALKLMRKSGIHITRHASLYETAPAYVTDQPRFLNSAVRADTKLGPHELLAALKRIEKDMGRTDGIRYGPRPIDLDILFYGKFKVRSDILTVPHERIWERPFVMAPLMDLLGTAIDSDTVASWHSFSGHSGGLNALWEKLGGESLIGEEGMYRVMPVANGLLDWSRRTLVMGILNLTPDSFSDGGNFQSVKSAVSQARLMISEGADIIDIGAQSTRPMASRISAEEELGRLIPVLEAVMSIPEVEGKLISVDTFYSEVALEAVRKGAHIINDVSAGKLDASMFKVMAELDVPYVAMHMRGDPSTMQDSENLKYDNVCKDISSELYSRVREAEISGIPAWRIIMDPGIGFSKKTEDNLAALTGIPDIREEISKRSLAISHAPILIGPSRKRFLGEICSRPSAVDRDPATIASVTAGVLCGANIVRVHNVKDNLDAVKLCDAILKQKSSPIKFKQ.

Residues 1-28 (MSILKCLGVRGNQLCAARNYLKVLGFSS) constitute a mitochondrion transit peptide. Positions 47 to 172 (VIALGSNVGD…PFVMAPLMDL (126 aa)) are HPPK. A Pterin-binding domain is found at 230–498 (TLVMGILNLT…NVKDNLDAVK (269 aa)). The DHPS stretch occupies residues 232 to 515 (VMGILNLTPD…QKSSPIKFKQ (284 aa)). Residue asparagine 237 participates in Mg(2+) binding. (7,8-dihydropterin-6-yl)methyl diphosphate is bound by residues threonine 277, aspartate 314, asparagine 333, aspartate 406, lysine 451, and 486 to 488 (RVH).

The protein in the N-terminal section; belongs to the HPPK family. It in the C-terminal section; belongs to the DHPS family. Homomultimer. Requires Mg(2+) as cofactor.

The protein localises to the mitochondrion. The enzyme catalyses 6-hydroxymethyl-7,8-dihydropterin + ATP = (7,8-dihydropterin-6-yl)methyl diphosphate + AMP + H(+). It catalyses the reaction (7,8-dihydropterin-6-yl)methyl diphosphate + 4-aminobenzoate = 7,8-dihydropteroate + diphosphate. It functions in the pathway cofactor biosynthesis; tetrahydrofolate biosynthesis; 2-amino-4-hydroxy-6-hydroxymethyl-7,8-dihydropteridine diphosphate from 7,8-dihydroneopterin triphosphate: step 4/4. It participates in cofactor biosynthesis; tetrahydrofolate biosynthesis; 7,8-dihydrofolate from 2-amino-4-hydroxy-6-hydroxymethyl-7,8-dihydropteridine diphosphate and 4-aminobenzoate: step 1/2. Functionally, catalyzes the first two consecutive steps of tetrahydrofolate biosynthesis. The protein is Folate synthesis bifunctional protein, mitochondrial of Pisum sativum (Garden pea).